A 158-amino-acid chain; its full sequence is Transcription elongation factor GreA (158 aa).

It belongs to the GreA/GreB family.

In terms of biological role, necessary for efficient RNA polymerase transcription elongation past template-encoded arresting sites. The arresting sites in DNA have the property of trapping a certain fraction of elongating RNA polymerases that pass through, resulting in locked ternary complexes. Cleavage of the nascent transcript by cleavage factors such as GreA or GreB allows the resumption of elongation from the new 3'terminus. GreA releases sequences of 2 to 3 nucleotides. This is Transcription elongation factor GreA from Psychrobacter cryohalolentis (strain ATCC BAA-1226 / DSM 17306 / VKM B-2378 / K5).